The following is a 90-amino-acid chain: Small ribosomal subunit protein bS18 (90 aa).

This sequence belongs to the bacterial ribosomal protein bS18 family. Part of the 30S ribosomal subunit. Forms a tight heterodimer with protein bS6.

Its function is as follows. Binds as a heterodimer with protein bS6 to the central domain of the 16S rRNA, where it helps stabilize the platform of the 30S subunit. This chain is Small ribosomal subunit protein bS18, found in Polynucleobacter asymbioticus (strain DSM 18221 / CIP 109841 / QLW-P1DMWA-1) (Polynucleobacter necessarius subsp. asymbioticus).